Reading from the N-terminus, the 401-residue chain is Nicotinate phosphoribosyltransferase (401 aa).

At His221 the chain carries Phosphohistidine; by autocatalysis.

This sequence belongs to the NAPRTase family. Post-translationally, transiently phosphorylated on a His residue during the reaction cycle. Phosphorylation strongly increases the affinity for substrates and increases the rate of nicotinate D-ribonucleotide production. Dephosphorylation regenerates the low-affinity form of the enzyme, leading to product release.

It carries out the reaction nicotinate + 5-phospho-alpha-D-ribose 1-diphosphate + ATP + H2O = nicotinate beta-D-ribonucleotide + ADP + phosphate + diphosphate. The protein operates within cofactor biosynthesis; NAD(+) biosynthesis; nicotinate D-ribonucleotide from nicotinate: step 1/1. Its function is as follows. Catalyzes the synthesis of beta-nicotinate D-ribonucleotide from nicotinate and 5-phospho-D-ribose 1-phosphate at the expense of ATP. This is Nicotinate phosphoribosyltransferase from Yersinia enterocolitica serotype O:8 / biotype 1B (strain NCTC 13174 / 8081).